The following is a 176-amino-acid chain: Zinc finger protein 428 (176 aa).

Residues 1–152 (MTETREPTET…EEEGGTYHCT (152 aa)) are disordered. Residues 16–46 (LEEDDEDLSPEPDSEEEEEEEEEETTDDPEY) show a composition bias toward acidic residues. Position 96 is a phosphothreonine (Thr96). The span at 126-138 (PSRTGETRPAGRD) shows a compositional bias: basic and acidic residues. The segment at 149–171 (YHCTECEDSFDNLGELHGHFMLH) adopts a C2H2-type zinc-finger fold.

In Mus musculus (Mouse), this protein is Zinc finger protein 428 (Znf428).